We begin with the raw amino-acid sequence, 416 residues long: Advanced glycosylation end product-specific receptor (416 aa).

An N-terminal signal peptide occupies residues Met-1–Gly-22. The Ig-like V-type domain occupies Asp-23–Arg-115. Topologically, residues Asp-23 to Ala-352 are extracellular. 2 N-linked (GlcNAc...) asparagine glycosylation sites follow: Asn-25 and Asn-80. Intrachain disulfides connect Cys-38–Cys-98 and Cys-143–Cys-207. Ig-like C2-type domains are found at residues Pro-123–His-220 and Pro-238–Ser-327. The chain crosses the membrane as a helical span at residues Leu-353–Trp-373. At His-374–Pro-416 the chain is on the cytoplasmic side. Positions Arg-377–Pro-416 are disordered. A compositionally biased stretch (acidic residues) spans Asn-389 to Ala-408.

Constitutive homodimer; disulfide-linked. Forms homooligomers. Interacts with S100A1 and APP. Interacts with S100B, S100A12 and S100A14. Interacts with TIRAP. Interacts with HMGB1. Interacts with LGP2; this interaction plays an important role in AGER-mediated pro-inflammatory responses and cytokine release. Interacts with double-strand break repair protein MRE11 which is a core component of the MRN complex; the interaction enhances MRE11 endonuclease activity and promotes DNA repair. Interacts with the MCM2-7 complex via interaction with complex member MCM2; the interaction is increased following DNA replication stress and stabilizes the MCM2-7 complex at replication forks. In terms of processing, phosphorylated on its cytoplasmic domain by PKCzeta/PRKCZ upon ligand binding. Phosphorylated by ATM following DNA damage. Post-translationally, targeted by the ubiquitin E3 ligase subunit FBXO10 to mediate its ubiquitination and degradation. Endothelial cells.

It is found in the cell membrane. The protein resides in the cell projection. The protein localises to the phagocytic cup. Its subcellular location is the early endosome. It localises to the nucleus. In terms of biological role, cell surface pattern recognition receptor that senses endogenous stress signals with a broad ligand repertoire including advanced glycation end products, S100 proteins, high-mobility group box 1 protein/HMGB1, amyloid beta/APP oligomers, nucleic acids, histones, phospholipids and glycosaminoglycans. Advanced glycosylation end products are nonenzymatically glycosylated proteins which accumulate in vascular tissue in aging and at an accelerated rate in diabetes. These ligands accumulate at inflammatory sites during the pathogenesis of various diseases including diabetes, vascular complications, neurodegenerative disorders and cancers, and RAGE transduces their binding into pro-inflammatory responses. Upon ligand binding, uses TIRAP and MYD88 as adapters to transduce the signal ultimately leading to the induction of inflammatory cytokines IL6, IL8 and TNFalpha through activation of NF-kappa-B. Interaction with S100A12 on endothelium, mononuclear phagocytes, and lymphocytes triggers cellular activation, with generation of key pro-inflammatory mediators. Interaction with S100B after myocardial infarction may play a role in myocyte apoptosis by activating ERK1/2 and p53/TP53 signaling. Contributes to the translocation of amyloid-beta peptide (ABPP) across the cell membrane from the extracellular to the intracellular space in cortical neurons. ABPP-initiated RAGE signaling, especially stimulation of p38 mitogen-activated protein kinase (MAPK), has the capacity to drive a transport system delivering ABPP as a complex with RAGE to the intraneuronal space. Participates in endothelial albumin transcytosis together with HMGB1 through the RAGE/SRC/Caveolin-1 pathway, leading to endothelial hyperpermeability. Mediates the loading of HMGB1 in extracellular vesicles (EVs) that shuttle HMGB1 to hepatocytes by transferrin-mediated endocytosis and subsequently promote hepatocyte pyroptosis by activating the NLRP3 inflammasome. Binds to DNA and promotes extracellular hypomethylated DNA (CpG DNA) uptake by cells via the endosomal route to activate inflammatory responses. Mediates phagocytosis by non-professional phagocytes (NPP) and this is enhanced by binding to ligands including RNA, DNA, HMGB1 and histones. Promotes NPP-mediated phagocytosis of Saccharomyces cerevisiae spores by binding to RNA attached to the spore wall. Also promotes NPP-mediated phagocytosis of apoptotic cells. Following DNA damage, recruited to DNA double-strand break sites where it colocalizes with the MRN repair complex via interaction with double-strand break repair protein MRE11. Enhances the endonuclease activity of MRE11, promoting the end resection of damaged DNA. Promotes DNA damage repair in trophoblasts which enhances trophoblast invasion and contributes to placental development and maintenance. Protects cells from DNA replication stress by localizing to damaged replication forks where it stabilizes the MCM2-7 complex and promotes faithful progression of the replication fork. In Bos taurus (Bovine), this protein is Advanced glycosylation end product-specific receptor (AGER).